The sequence spans 272 residues: Tryptophan synthase alpha chain (272 aa).

Active-site proton acceptor residues include glutamate 49 and aspartate 60.

The protein belongs to the TrpA family. In terms of assembly, tetramer of two alpha and two beta chains.

The catalysed reaction is (1S,2R)-1-C-(indol-3-yl)glycerol 3-phosphate + L-serine = D-glyceraldehyde 3-phosphate + L-tryptophan + H2O. It functions in the pathway amino-acid biosynthesis; L-tryptophan biosynthesis; L-tryptophan from chorismate: step 5/5. The alpha subunit is responsible for the aldol cleavage of indoleglycerol phosphate to indole and glyceraldehyde 3-phosphate. The polypeptide is Tryptophan synthase alpha chain (Acidithiobacillus ferrooxidans (strain ATCC 23270 / DSM 14882 / CIP 104768 / NCIMB 8455) (Ferrobacillus ferrooxidans (strain ATCC 23270))).